The chain runs to 134 residues: uncharacterized protein (134 aa).

3 helical membrane-spanning segments follow: residues 21–41, 52–72, and 95–115; these read FSTT…LYLI, LVLL…TPYE, and IVMA…VYII.

It localises to the host membrane. This is an uncharacterized protein from Acidianus two-tailed virus (ATV).